We begin with the raw amino-acid sequence, 411 residues long: Glutamate dehydrogenase 2, mitochondrial (411 aa).

The transit peptide at 1 to 18 directs the protein to the mitochondrion; it reads MNALAATSRNFRQAARLL. The active site involves Lys102.

This sequence belongs to the Glu/Leu/Phe/Val dehydrogenases family. As to expression, expressed in roots. Expressed ubiquitously in various tissues.

The protein resides in the mitochondrion. It catalyses the reaction L-glutamate + NAD(+) + H2O = 2-oxoglutarate + NH4(+) + NADH + H(+). It carries out the reaction L-glutamate + NADP(+) + H2O = 2-oxoglutarate + NH4(+) + NADPH + H(+). The chain is Glutamate dehydrogenase 2, mitochondrial (GDH2) from Oryza sativa subsp. japonica (Rice).